We begin with the raw amino-acid sequence, 297 residues long: HTH-type transcriptional regulator ArgP (297 aa).

In terms of domain architecture, HTH lysR-type spans Pro4–Thr60. The segment at residues Phe21–Lys40 is a DNA-binding region (H-T-H motif).

Belongs to the LysR transcriptional regulatory family. Homodimer.

Functionally, controls the transcription of genes involved in arginine and lysine metabolism. The polypeptide is HTH-type transcriptional regulator ArgP (Cronobacter sakazakii (strain ATCC BAA-894) (Enterobacter sakazakii)).